Here is a 311-residue protein sequence, read N- to C-terminus: Ribosomal RNA small subunit methyltransferase H (311 aa).

S-adenosyl-L-methionine-binding positions include 32–34, Asp-52, Phe-79, Asp-100, and Gln-107; that span reads AGH.

The protein belongs to the methyltransferase superfamily. RsmH family.

Its subcellular location is the cytoplasm. It carries out the reaction cytidine(1402) in 16S rRNA + S-adenosyl-L-methionine = N(4)-methylcytidine(1402) in 16S rRNA + S-adenosyl-L-homocysteine + H(+). Specifically methylates the N4 position of cytidine in position 1402 (C1402) of 16S rRNA. The protein is Ribosomal RNA small subunit methyltransferase H of Staphylococcus aureus (strain bovine RF122 / ET3-1).